The following is a 293-amino-acid chain: Signal recognition particle receptor FtsY (293 aa).

GTP-binding positions include 93–100 (GVNGAGKT), 175–179 (DTAGR), and 239–242 (TKLD).

It belongs to the GTP-binding SRP family. FtsY subfamily. In terms of assembly, part of the signal recognition particle protein translocation system, which is composed of SRP and FtsY. SRP is a ribonucleoprotein composed of Ffh and a 4.5S RNA molecule.

Its subcellular location is the cell inner membrane. It is found in the cytoplasm. The catalysed reaction is GTP + H2O = GDP + phosphate + H(+). Functionally, involved in targeting and insertion of nascent membrane proteins into the cytoplasmic membrane. Acts as a receptor for the complex formed by the signal recognition particle (SRP) and the ribosome-nascent chain (RNC). Interaction with SRP-RNC leads to the transfer of the RNC complex to the Sec translocase for insertion into the membrane, the hydrolysis of GTP by both Ffh and FtsY, and the dissociation of the SRP-FtsY complex into the individual components. In Helicobacter pylori (strain J99 / ATCC 700824) (Campylobacter pylori J99), this protein is Signal recognition particle receptor FtsY.